The following is a 188-amino-acid chain: Peptidyl-tRNA hydrolase (188 aa).

Tyr-14 contacts tRNA. The Proton acceptor role is filled by His-19. Tyr-64, Asn-66, and Asn-112 together coordinate tRNA.

This sequence belongs to the PTH family. Monomer.

Its subcellular location is the cytoplasm. It carries out the reaction an N-acyl-L-alpha-aminoacyl-tRNA + H2O = an N-acyl-L-amino acid + a tRNA + H(+). Its function is as follows. Hydrolyzes ribosome-free peptidyl-tRNAs (with 1 or more amino acids incorporated), which drop off the ribosome during protein synthesis, or as a result of ribosome stalling. Catalyzes the release of premature peptidyl moieties from peptidyl-tRNA molecules trapped in stalled 50S ribosomal subunits, and thus maintains levels of free tRNAs and 50S ribosomes. The sequence is that of Peptidyl-tRNA hydrolase from Clostridium perfringens (strain SM101 / Type A).